Reading from the N-terminus, the 435-residue chain is Iron(III) enterobactin esterase (435 aa).

It belongs to the Fes family.

It localises to the cytoplasm. The enzyme catalyses Fe(III)-enterobactin + 3 H2O + H(+) = Fe(III)-[N-(2,3-dihydroxybenzoyl)-L-serine] + 2 N-(2,3-dihydroxybenzoyl)-L-serine. It carries out the reaction Fe(III)-enterobactin + H2O = Fe(III)-[N-(2,3-dihydroxybenzoyl)-L-serine]3 + H(+). It catalyses the reaction Fe(III)-[N-(2,3-dihydroxybenzoyl)-L-serine]3 + H2O + H(+) = Fe(III)-[N-(2,3-dihydroxybenzoyl)-L-serine]2 + N-(2,3-dihydroxybenzoyl)-L-serine. The catalysed reaction is Fe(III)-[N-(2,3-dihydroxybenzoyl)-L-serine]2 + H2O + H(+) = Fe(III)-[N-(2,3-dihydroxybenzoyl)-L-serine] + N-(2,3-dihydroxybenzoyl)-L-serine. Its function is as follows. Catalyzes the hydrolysis of ferric enterobactin (Fe-Ent). Is responsible for the release of iron from ferric enterobactin. The protein is Iron(III) enterobactin esterase (fes) of Dickeya dadantii (strain 3937) (Erwinia chrysanthemi (strain 3937)).